Reading from the N-terminus, the 346-residue chain is dTDP-glucose 4,6-dehydratase (346 aa).

NAD(+) contacts are provided by residues 17 to 18 (FI), 38 to 41 (DKLT), 64 to 65 (DI), 86 to 90 (LAAES), and Thr105. Ser90 serves as a coordination point for substrate. Thr139 lines the substrate pocket. Asp140 acts as the Proton donor in catalysis. Active-site proton acceptor residues include Glu141 and Tyr165. 165-169 (YSASK) contributes to the NAD(+) binding site. Asn194 is a binding site for substrate. Asn195 contributes to the NAD(+) binding site. Substrate is bound by residues 204 to 205 (KL), 220 to 222 (PVY), Arg229, Asn264, and 298 to 302 (DRPGH).

Belongs to the NAD(P)-dependent epimerase/dehydratase family. dTDP-glucose dehydratase subfamily. Homodimer. NAD(+) serves as cofactor.

The catalysed reaction is dTDP-alpha-D-glucose = dTDP-4-dehydro-6-deoxy-alpha-D-glucose + H2O. Its pathway is carbohydrate biosynthesis; dTDP-L-rhamnose biosynthesis. It participates in bacterial outer membrane biogenesis; LPS O-antigen biosynthesis. In terms of biological role, catalyzes the dehydration of dTDP-D-glucose to form dTDP-6-deoxy-D-xylo-4-hexulose via a three-step process involving oxidation, dehydration and reduction. In Neisseria gonorrhoeae, this protein is dTDP-glucose 4,6-dehydratase.